A 328-amino-acid chain; its full sequence is Putative glycosyltransferase 41 (328 aa).

It belongs to the glycosyltransferase group 1 family. Glycosyltransferase 4 subfamily.

The protein is Putative glycosyltransferase 41 (SIFV0041) of Sulfolobus islandicus filamentous virus (isolate Iceland/Hveragerdi) (SIFV).